A 90-amino-acid chain; its full sequence is Small ribosomal subunit protein uS15 (90 aa).

Belongs to the universal ribosomal protein uS15 family. In terms of assembly, part of the 30S ribosomal subunit. Forms a bridge to the 50S subunit in the 70S ribosome, contacting the 23S rRNA.

In terms of biological role, one of the primary rRNA binding proteins, it binds directly to 16S rRNA where it helps nucleate assembly of the platform of the 30S subunit by binding and bridging several RNA helices of the 16S rRNA. Forms an intersubunit bridge (bridge B4) with the 23S rRNA of the 50S subunit in the ribosome. This chain is Small ribosomal subunit protein uS15, found in Campylobacter lari (strain RM2100 / D67 / ATCC BAA-1060).